The following is a 401-amino-acid chain: Phosphoglycerate kinase (401 aa).

Residues Asp20 to Asn22, Arg35, His58 to Arg61, Arg117, and Arg154 contribute to the substrate site. ATP-binding positions include Lys204, Gly298, Glu329, and Gly358 to Ser361.

Belongs to the phosphoglycerate kinase family. Monomer.

It localises to the cytoplasm. The enzyme catalyses (2R)-3-phosphoglycerate + ATP = (2R)-3-phospho-glyceroyl phosphate + ADP. It participates in carbohydrate degradation; glycolysis; pyruvate from D-glyceraldehyde 3-phosphate: step 2/5. This is Phosphoglycerate kinase from Bifidobacterium longum subsp. infantis (strain ATCC 15697 / DSM 20088 / JCM 1222 / NCTC 11817 / S12).